Consider the following 566-residue polypeptide: ATP-dependent RNA helicase DBP3 (566 aa).

Positions 1–139 are disordered; sequence MSAGKKHARD…TTPNGSAQRN (139 aa). A compositionally biased stretch (basic residues) spans 39–58; that stretch reads DKKKKDKKDKKERKEKKEKK. Positions 81–91 are enriched in basic and acidic residues; it reads SEPKPEKEKKE. Over residues 92-102 the composition is skewed to basic residues; sequence KNNKKDKKDKK. Polar residues predominate over residues 127-139; it reads AATTTPNGSAQRN. The Q motif motif lies at 182–209; that stretch reads IHFSHLPTSTLTSKKPFASFTAPTPIQA. The Helicase ATP-binding domain occupies 212–396; sequence WPFALSGRDV…EGFMIDPVKA (185 aa). 225–232 lines the ATP pocket; the sequence is AETGSGKT. Positions 342-345 match the DEAD box motif; the sequence is DEAD. Residues 433-566 enclose the Helicase C-terminal domain; it reads GKEQRLLELL…TEHDKSHSGS (134 aa).

Belongs to the DEAD box helicase family. DDX5/DBP2 subfamily.

Its subcellular location is the nucleus. The protein resides in the nucleolus. It carries out the reaction ATP + H2O = ADP + phosphate + H(+). Its function is as follows. ATP-dependent RNA helicase required for 60S ribosomal subunit synthesis. Involved in efficient pre-rRNA processing, predominantly at site A3, which is necessary for the normal formation of 25S and 5.8S rRNAs. This Chaetomium globosum (strain ATCC 6205 / CBS 148.51 / DSM 1962 / NBRC 6347 / NRRL 1970) (Soil fungus) protein is ATP-dependent RNA helicase DBP3 (DBP3).